We begin with the raw amino-acid sequence, 215 residues long: Phosphatidylserine decarboxylase proenzyme (215 aa).

The active-site Schiff-base intermediate with substrate; via pyruvic acid is S185. S185 is modified (pyruvic acid (Ser); by autocatalysis).

It belongs to the phosphatidylserine decarboxylase family. PSD-A subfamily. Heterodimer of a large membrane-associated beta subunit and a small pyruvoyl-containing alpha subunit. Requires pyruvate as cofactor. Post-translationally, is synthesized initially as an inactive proenzyme. Formation of the active enzyme involves a self-maturation process in which the active site pyruvoyl group is generated from an internal serine residue via an autocatalytic post-translational modification. Two non-identical subunits are generated from the proenzyme in this reaction, and the pyruvate is formed at the N-terminus of the alpha chain, which is derived from the carboxyl end of the proenzyme. The post-translation cleavage follows an unusual pathway, termed non-hydrolytic serinolysis, in which the side chain hydroxyl group of the serine supplies its oxygen atom to form the C-terminus of the beta chain, while the remainder of the serine residue undergoes an oxidative deamination to produce ammonia and the pyruvoyl prosthetic group on the alpha chain.

The protein resides in the cell membrane. The catalysed reaction is a 1,2-diacyl-sn-glycero-3-phospho-L-serine + H(+) = a 1,2-diacyl-sn-glycero-3-phosphoethanolamine + CO2. Its pathway is phospholipid metabolism; phosphatidylethanolamine biosynthesis; phosphatidylethanolamine from CDP-diacylglycerol: step 2/2. Functionally, catalyzes the formation of phosphatidylethanolamine (PtdEtn) from phosphatidylserine (PtdSer). In Streptomyces griseus subsp. griseus (strain JCM 4626 / CBS 651.72 / NBRC 13350 / KCC S-0626 / ISP 5235), this protein is Phosphatidylserine decarboxylase proenzyme.